The following is a 1381-amino-acid chain: MAYSFTEKKRIRKDFGKLPNILDVPYLLATQVDSYRQFLQDEVSEDARDTEVGLEGAFRSVFPIQSHSGNAELQYVSYRIGDPPFEVKECQSRGLTYAAPLRMLVRLALYDKEGGGVKDIKEQEVYMGEMPLMTSTGTFVVNGTERVIVNQLHRSPGVFFDHDKGKSHSSGKLLFSARVIPYRGSWLDFEFDPKDTIYVRIDRRRKLPATILLRALGYTPEEILYAFFDTDRFHLGSGNKVVLDLVPERLRGETASFDIVAGGETIVEAGRRVTARHVKQLQKSGVEQLEVPEDYLTGKIIAHDVIDPATGEILAEANTTLTPEITQSLFDAGIREIETLFVNDLDRGPYMSTTLAADATRSQMEALVEIYRMMRPGEPPTKDAAENLFHTLFFTSDRYDLSPVGRMKFNLRVGRDEVRGPGILYDGKYFAGLGNADKEADDLIEQYGESSDILDVLRELIDIRNGNGQVDDIDHLGNRRVRSVGEMAENVFRVGLVRVERAVKERLSLAESEGLMPQELINAKPVAAAIKEFFGSSQLSQFMDQNNPLSEVTHKRRISALGPGGLTRERAGFEVRDVHPTHYGRVCPIETPEGPNIGLINSLAVYARANRYGFLETAYRKVVDGQVTDQVEYLSAIEESRYVIAQANARVDESGYLADDLISCRHQNEFTMATADRVQYMDVSPRQIVSVAASLVPFLEHDDANRALMGANMQRQAVPTLRADKPLVGTGMERTVARDSGVIVTAERGGVVEQVDSGRIVVRVDDEETTPGEPGVDIYSLTKYTRSNQNTCFSQKPLVHVGDRVARGDALADGPSTDMGELALGQNMLVAFMPWNGYNFEDSILISEKLVKEDRYTSVHIEELTCVARDTKLGSEEITSDIPNVSESALSRLDESGIVYIGAEVKAGDILVGKVTPKGETQLTPEEKLLRAIFGEKASDVKDTSLRVPTGMDGTVIDVQVFTRDGVEKDERARAIEREEIARVRKDLDDEARIFEDDAYARLEKLLVGKVAEGGPKGLGSGAEVTEAYLQDLPRERWFEIRMRDEAVNQQLEAVRHQLETQRDRFERRFQEKKEKITAGDDLSPGVLKTVKVHLAVKRRLQPGDKFAGRHGNKGVISMIVPEEDMPYMDDGTPVEVVLSPLGVPSRMNVGQVLETHLGWAARGLGHQIGQMLEQQADAEALRGYLSEIYDASGRKEELETLSEEELQELCHNLKGGVPAATPVFDGANEGEIKRWLKLAGLPESGQTTLYDGRTGDAFDRPITVGYMYMLKLNHLVDDKVHARATGPYSLVTQQPLGGKAQFGGQRFGEMEVWALEAYGAAYTLQEMLTVKSDDVSGRTKMYKNIVDGDHRMEAGMPESFNVLVKEIRSLGINIELERDD.

This sequence belongs to the RNA polymerase beta chain family. In terms of assembly, the RNAP catalytic core consists of 2 alpha, 1 beta, 1 beta' and 1 omega subunit. When a sigma factor is associated with the core the holoenzyme is formed, which can initiate transcription.

It catalyses the reaction RNA(n) + a ribonucleoside 5'-triphosphate = RNA(n+1) + diphosphate. Functionally, DNA-dependent RNA polymerase catalyzes the transcription of DNA into RNA using the four ribonucleoside triphosphates as substrates. This is DNA-directed RNA polymerase subunit beta from Halorhodospira halophila (strain DSM 244 / SL1) (Ectothiorhodospira halophila (strain DSM 244 / SL1)).